Reading from the N-terminus, the 359-residue chain is Peptide chain release factor 1 (359 aa).

N5-methylglutamine is present on glutamine 235.

The protein belongs to the prokaryotic/mitochondrial release factor family. Methylated by PrmC. Methylation increases the termination efficiency of RF1.

It localises to the cytoplasm. Functionally, peptide chain release factor 1 directs the termination of translation in response to the peptide chain termination codons UAG and UAA. In Anaplasma phagocytophilum (strain HZ), this protein is Peptide chain release factor 1.